Consider the following 704-residue polypeptide: G-protein coupled receptor-associated protein LMBRD2B (704 aa).

Residues 1–3 lie on the Extracellular side of the membrane; the sequence is MSG. A helical transmembrane segment spans residues 4 to 21; the sequence is AALGIEIVVVFFLALFLL. Residues 22–33 lie on the Cytoplasmic side of the membrane; it reads HRYGDFKKQQRM. Residues 34–54 traverse the membrane as a helical segment; the sequence is VLFGTLLAWYLCFLIVFILPL. Over 55-111 the chain is Extracellular; it reads DVSTTIYNQCLIDQEAQTQTPSVSPVLSEQTTANASISPAKSTQRVCYKPWSYIPDG. Asparagine 88 carries an N-linked (GlcNAc...) asparagine glycan. Residues 112 to 132 traverse the membrane as a helical segment; the sequence is IMPVFWRVVYWTSQCLTWLLL. The Cytoplasmic segment spans residues 133-157; sequence PFMQSYARSGGFTITGKIKTALIEN. Residues 158-178 traverse the membrane as a helical segment; that stretch reads AIYYGTYLFIFGSLLIYVAVH. Topologically, residues 179-192 are extracellular; the sequence is PQWHLSWYELQTIG. The helical transmembrane segment at 193 to 213 threads the bilayer; sequence ITAANTWGLFLLVLLLGYGLV. Over 214 to 393 the chain is Cytoplasmic; sequence DIPRSYWEAS…ECLLKQWFYR (180 aa). A coiled-coil region spans residues 235–266; it reads KAAKLMTEKADSEENLEDVMEEVRKINESIKY. The chain crosses the membrane as a helical span at residues 394–414; the sequence is VLAVVLALFSVAVVWSECTFF. The Extracellular portion of the chain corresponds to 415–438; that stretch reads STHPVLSLFAVFIQLAERDYNYLY. A helical transmembrane segment spans residues 439–459; it reads IEMACFITIFFLCTCVYSTVF. Residues 460–481 lie on the Cytoplasmic side of the membrane; the sequence is RIRVFNYYYLASHHQTDAYSLQ. A helical membrane pass occupies residues 482-502; the sequence is FSGMLFCRLTPPLCLNFLGLI. The Extracellular portion of the chain corresponds to 503 to 527; that stretch reads HMDSAISHQAKKQTAYTSIMGSMRV. Residues 528-548 form a helical membrane-spanning segment; it reads LSFIANGFYIYYPMLIVVLCI. The Cytoplasmic portion of the chain corresponds to 549-704; sequence ATYFSLGTRC…SSRNRIFDDV (156 aa). A coiled-coil region spans residues 576–612; sequence DLIDEGRELLRRERRKRQRIEDGENRRREWRERYAQR. Disordered stretches follow at residues 613 to 654 and 672 to 704; these read DENA…QSGR and TLTD…FDDV. Residues 631–654 are compositionally biased toward polar residues; the sequence is YGETLNANTNRQAKYTRSGSQSGR.

Belongs to the LIMR family.

It localises to the cell membrane. Its function is as follows. May associate with G-protein coupled receptors and regulate downstream signaling pathways. The protein is G-protein coupled receptor-associated protein LMBRD2B (lmbrd2b) of Danio rerio (Zebrafish).